The chain runs to 148 residues: Deoxyuridine 5'-triphosphate nucleotidohydrolase (148 aa).

Substrate is bound by residues 68–70 (RSG), asparagine 81, 85–87 (TID), and lysine 95.

Belongs to the dUTPase family. Requires Mg(2+) as cofactor.

The enzyme catalyses dUTP + H2O = dUMP + diphosphate + H(+). The protein operates within pyrimidine metabolism; dUMP biosynthesis; dUMP from dCTP (dUTP route): step 2/2. Functionally, this enzyme is involved in nucleotide metabolism: it produces dUMP, the immediate precursor of thymidine nucleotides and it decreases the intracellular concentration of dUTP so that uracil cannot be incorporated into DNA. In Rickettsia akari (strain Hartford), this protein is Deoxyuridine 5'-triphosphate nucleotidohydrolase.